A 266-amino-acid polypeptide reads, in one-letter code: Ribosomal RNA small subunit methyltransferase J (266 aa).

Residues 109–110, 125–126, and aspartate 185 each bind S-adenosyl-L-methionine; these read RD and ER.

Belongs to the methyltransferase superfamily. RsmJ family.

The protein resides in the cytoplasm. The catalysed reaction is guanosine(1516) in 16S rRNA + S-adenosyl-L-methionine = N(2)-methylguanosine(1516) in 16S rRNA + S-adenosyl-L-homocysteine + H(+). Functionally, specifically methylates the guanosine in position 1516 of 16S rRNA. This is Ribosomal RNA small subunit methyltransferase J from Cellvibrio japonicus (strain Ueda107) (Pseudomonas fluorescens subsp. cellulosa).